We begin with the raw amino-acid sequence, 80 residues long: Cell division protein ZapB (80 aa).

A coiled-coil region spans residues 3–80; that stretch reads FEVLEQLEAK…NLLGKMDDVE (78 aa).

The protein belongs to the ZapB family. In terms of assembly, homodimer. The ends of the coiled-coil dimer bind to each other, forming polymers. Interacts with FtsZ.

The protein localises to the cytoplasm. Functionally, non-essential, abundant cell division factor that is required for proper Z-ring formation. It is recruited early to the divisome by direct interaction with FtsZ, stimulating Z-ring assembly and thereby promoting cell division earlier in the cell cycle. Its recruitment to the Z-ring requires functional FtsA or ZipA. The protein is Cell division protein ZapB of Vibrio atlanticus (strain LGP32) (Vibrio splendidus (strain Mel32)).